We begin with the raw amino-acid sequence, 282 residues long: 2,3,4,5-tetrahydropyridine-2,6-dicarboxylate N-succinyltransferase (282 aa).

Arg109 and Asp146 together coordinate substrate.

It belongs to the transferase hexapeptide repeat family. In terms of assembly, homotrimer.

The protein localises to the cytoplasm. The enzyme catalyses (S)-2,3,4,5-tetrahydrodipicolinate + succinyl-CoA + H2O = (S)-2-succinylamino-6-oxoheptanedioate + CoA. It participates in amino-acid biosynthesis; L-lysine biosynthesis via DAP pathway; LL-2,6-diaminopimelate from (S)-tetrahydrodipicolinate (succinylase route): step 1/3. In Bartonella bacilliformis (strain ATCC 35685 / KC583 / Herrer 020/F12,63), this protein is 2,3,4,5-tetrahydropyridine-2,6-dicarboxylate N-succinyltransferase.